We begin with the raw amino-acid sequence, 547 residues long: Chaperonin GroEL 1 (547 aa).

ATP is bound by residues 30–33, lysine 51, 87–91, glycine 415, and aspartate 495; these read TLGP and DGTTT.

This sequence belongs to the chaperonin (HSP60) family. As to quaternary structure, forms a cylinder of 14 subunits composed of two heptameric rings stacked back-to-back. Interacts with the co-chaperonin GroES.

It localises to the cytoplasm. It catalyses the reaction ATP + H2O + a folded polypeptide = ADP + phosphate + an unfolded polypeptide.. Its function is as follows. Together with its co-chaperonin GroES, plays an essential role in assisting protein folding. The GroEL-GroES system forms a nano-cage that allows encapsulation of the non-native substrate proteins and provides a physical environment optimized to promote and accelerate protein folding. The chain is Chaperonin GroEL 1 from Azorhizobium caulinodans (strain ATCC 43989 / DSM 5975 / JCM 20966 / LMG 6465 / NBRC 14845 / NCIMB 13405 / ORS 571).